We begin with the raw amino-acid sequence, 239 residues long: UPF0173 metal-dependent hydrolase rrnAC0300 (239 aa).

This sequence belongs to the UPF0173 family.

The protein is UPF0173 metal-dependent hydrolase rrnAC0300 of Haloarcula marismortui (strain ATCC 43049 / DSM 3752 / JCM 8966 / VKM B-1809) (Halobacterium marismortui).